Reading from the N-terminus, the 185-residue chain is Ribose 1,5-bisphosphate phosphokinase PhnN (185 aa).

Residue 10–17 coordinates ATP; sequence GPSGSGKD.

The protein belongs to the ribose 1,5-bisphosphokinase family.

The enzyme catalyses alpha-D-ribose 1,5-bisphosphate + ATP = 5-phospho-alpha-D-ribose 1-diphosphate + ADP. It participates in metabolic intermediate biosynthesis; 5-phospho-alpha-D-ribose 1-diphosphate biosynthesis; 5-phospho-alpha-D-ribose 1-diphosphate from D-ribose 5-phosphate (route II): step 3/3. Its function is as follows. Catalyzes the phosphorylation of ribose 1,5-bisphosphate to 5-phospho-D-ribosyl alpha-1-diphosphate (PRPP). The protein is Ribose 1,5-bisphosphate phosphokinase PhnN of Pseudomonas paraeruginosa (strain DSM 24068 / PA7) (Pseudomonas aeruginosa (strain PA7)).